The primary structure comprises 372 residues: Proton-coupled zinc antiporter SLC30A2 (372 aa).

Residues 1–140 are Cytoplasmic-facing; the sequence is MEAKEKQHLL…TMNFGWQRAE (140 aa). A Mitochondrial localization signal motif is present at residues 51 to 54; sequence HHCH. The Zn(2+) site is built by Cys-53, His-106, and Asp-110. A helical transmembrane segment spans residues 141–161; sequence ILGALVSVLSIWVVTGVLVYL. The Lumenal portion of the chain corresponds to 162–175; the sequence is AVERLISGDYEIDG. Residues 176-196 traverse the membrane as a helical segment; it reads GTMLITSGCAVAVNIIMGLTL. At 197-220 the chain is on the cytoplasmic side; that stretch reads HQSGHGHSHGTTNQQEENPSVRAA. A helical transmembrane segment spans residues 221–241; sequence FIHVIGDFMQSMGVLVAAYIL. Positions 223 and 227 each coordinate Zn(2+). Residues 242–249 are Lumenal-facing; that stretch reads YFKPEYKY. Residues 250–270 traverse the membrane as a helical segment; sequence VDPICTFVFSILVLGTTLTIL. Topologically, residues 271-304 are cytoplasmic; it reads RDVILVLMEGTPKGVDFTAVRDLLLSVEGVEALH. Residues 294–295 carry the Lysosomal targeting motif motif; sequence LL. The residue at position 296 (Ser-296) is a Phosphoserine. His-304, His-321, and Glu-355 together coordinate Zn(2+). A helical membrane pass occupies residues 305–325; the sequence is SLHIWALTVAQPVLSVHIAIA. At 326-372 the chain is on the lumenal side; the sequence is QNTDAQAVLKTASSRLQGKFHFHTVTIQIEDYSEDMKDCQACQGPSD.

It belongs to the cation diffusion facilitator (CDF) transporter (TC 2.A.4) family. SLC30A subfamily. Homodimer. Interacts (via lysosomal targeting motif) with AP3D1; in AP-3-mediated transport to lysosomes. Interacts with TMEM163. Phosphorylated at Ser-296. Phosphorylation at Ser-296 prevents localization to lysosomes. Dephosphorylation of Ser-296 which triggers localization to lysosomes, accumulation of zinc into lysosomes and lysosomal-mediated cell death is induced by TNF-alpha.

The protein localises to the cytoplasmic vesicle. The protein resides in the secretory vesicle membrane. Its subcellular location is the zymogen granule membrane. It is found in the endosome membrane. It localises to the lysosome membrane. The protein localises to the mitochondrion inner membrane. The protein resides in the cell membrane. It carries out the reaction Zn(2+)(in) + 2 H(+)(out) = Zn(2+)(out) + 2 H(+)(in). In terms of biological role, electroneutral proton-coupled antiporter concentrating zinc ions into a variety of intracellular organelles including endosomes, zymogen granules and mitochondria. Thereby, plays a crucial role in cellular zinc homeostasis to confer upon cells protection against its potential cytotoxicity. Regulates the zinc concentration of milk, through the transport of zinc ions into secretory vesicles of mammary cells. By concentrating zinc ions into lysosomes participates to lysosomal-mediated cell death during early mammary gland involution. Its function is as follows. Electroneutral proton-coupled antiporter mediating the efflux of zinc ions through the plasma membrane. The sequence is that of Proton-coupled zinc antiporter SLC30A2 from Homo sapiens (Human).